The following is a 1938-amino-acid chain: Histone-lysine N-methyltransferase SETD1B (1938 aa).

Over residues 1-20 (MSFKEAKPGERGKNPEDHGR) the composition is skewed to basic and acidic residues. The disordered stretch occupies residues 1–44 (MSFKEAKPGERGKNPEDHGRKQAASWMNGMEAANQPSTSAEKKS). The 89-residue stretch at 111-199 (DEFYVGPVPP…NIIHAELDTK (89 aa)) folds into the RRM domain. 11 disordered regions span residues 226–357 (LDAS…ENTF), 369–484 (FPRT…TRIA), 496–630 (LISS…EVTP), 652–688 (GFPP…VPPP), 916–1125 (KEPP…SSPV), 1147–1174 (HQTA…HKQD), 1187–1206 (MQQN…NEEE), 1327–1373 (KTLS…GNSL), 1413–1468 (FPES…VPHM), 1496–1528 (ECEF…PKKP), and 1744–1772 (DEPP…RRSE). Polar residues-rich tracts occupy residues 254–290 (VTPN…QGTP), 298–312 (PFSQ…QTTP), 375–407 (LSHS…PQTS), and 446–457 (DSTTEQKASFAQ). Residues 512–531 (SPISSSSSQLSPIPPYSSSS) show a composition bias toward low complexity. Composition is skewed to polar residues over residues 532-546 (HYQD…SSTG) and 569-585 (SLCQ…QINQ). The span at 588–599 (RKMETLDNKELV) shows a compositional bias: basic and acidic residues. Residues 619-628 (EDMEISDDEV) are compositionally biased toward acidic residues. Acidic residues-rich tracts occupy residues 976 to 990 (SEGE…DDGE) and 1054 to 1114 (DSSD…EDFF). Over residues 1159–1174 (KDLDVPLVESKEHKQD) the composition is skewed to basic and acidic residues. Residues 1329 to 1343 (LSEEELPRTPGRDIL) are compositionally biased toward basic and acidic residues. Composition is skewed to polar residues over residues 1349 to 1358 (LGKSQSTETI) and 1441 to 1453 (EPTS…NSVP). Over residues 1454-1464 (SPIPFASPPRG) the composition is skewed to pro residues. Polar residues predominate over residues 1751–1765 (QGKSIPAQPQASTRA). The RxxxRR motif signature appears at 1770-1775 (RSEQRR). In terms of domain architecture, SET spans 1799-1916 (KKIRFCKSHI…VNEEITYDYK (118 aa)). Y1915 serves as a coordination point for S-adenosyl-L-methionine. The region spanning 1922–1938 (VKIPCLCGAENCRGTLN) is the Post-SET domain.

It belongs to the class V-like SAM-binding methyltransferase superfamily. In terms of assembly, component of the SET1B/COMPASS complex.

The protein resides in the nucleus speckle. The protein localises to the chromosome. The enzyme catalyses L-lysyl(4)-[histone H3] + 3 S-adenosyl-L-methionine = N(6),N(6),N(6)-trimethyl-L-lysyl(4)-[histone H3] + 3 S-adenosyl-L-homocysteine + 3 H(+). Its function is as follows. Histone methyltransferase that specifically methylates 'Lys-4' of histone H3, when part of the SET1 histone methyltransferase (HMT) complex, but not if the neighboring 'Lys-9' residue is already methylated. H3 'Lys-4' methylation represents a specific tag for epigenetic transcriptional activation. The protein is Histone-lysine N-methyltransferase SETD1B (setd1b) of Xenopus laevis (African clawed frog).